Reading from the N-terminus, the 849-residue chain is Protein translocase subunit SecA (849 aa).

ATP-binding positions include glutamine 85, 103 to 107, and aspartate 493; that span reads GEGKT. Residues cysteine 832, cysteine 834, cysteine 843, and histidine 844 each coordinate Zn(2+).

The protein belongs to the SecA family. As to quaternary structure, monomer and homodimer. Part of the essential Sec protein translocation apparatus which comprises SecA, SecYEG and auxiliary proteins SecDF. Other proteins may also be involved. It depends on Zn(2+) as a cofactor.

It is found in the cell membrane. Its subcellular location is the cytoplasm. It carries out the reaction ATP + H2O + cellular proteinSide 1 = ADP + phosphate + cellular proteinSide 2.. Part of the Sec protein translocase complex. Interacts with the SecYEG preprotein conducting channel. Has a central role in coupling the hydrolysis of ATP to the transfer of proteins into and across the cell membrane, serving as an ATP-driven molecular motor driving the stepwise translocation of polypeptide chains across the membrane. The sequence is that of Protein translocase subunit SecA from Streptococcus thermophilus (strain ATCC BAA-491 / LMD-9).